A 410-amino-acid chain; its full sequence is Probable tRNA sulfurtransferase (410 aa).

A THUMP domain is found at 58 to 167 (AELTRRLQEV…RREIFVSVER (110 aa)). ATP is bound by residues 185–186 (LL), 210–211 (HF), Arg-267, Gly-289, and Gln-298.

Belongs to the ThiI family.

The protein resides in the cytoplasm. It carries out the reaction [ThiI sulfur-carrier protein]-S-sulfanyl-L-cysteine + a uridine in tRNA + 2 reduced [2Fe-2S]-[ferredoxin] + ATP + H(+) = [ThiI sulfur-carrier protein]-L-cysteine + a 4-thiouridine in tRNA + 2 oxidized [2Fe-2S]-[ferredoxin] + AMP + diphosphate. The catalysed reaction is [ThiS sulfur-carrier protein]-C-terminal Gly-Gly-AMP + S-sulfanyl-L-cysteinyl-[cysteine desulfurase] + AH2 = [ThiS sulfur-carrier protein]-C-terminal-Gly-aminoethanethioate + L-cysteinyl-[cysteine desulfurase] + A + AMP + 2 H(+). It participates in cofactor biosynthesis; thiamine diphosphate biosynthesis. Functionally, catalyzes the ATP-dependent transfer of a sulfur to tRNA to produce 4-thiouridine in position 8 of tRNAs, which functions as a near-UV photosensor. Also catalyzes the transfer of sulfur to the sulfur carrier protein ThiS, forming ThiS-thiocarboxylate. This is a step in the synthesis of thiazole, in the thiamine biosynthesis pathway. The sulfur is donated as persulfide by IscS. The chain is Probable tRNA sulfurtransferase from Nocardia farcinica (strain IFM 10152).